Consider the following 1002-residue polypeptide: Ephrin type-B receptor 5 (1002 aa).

A signal peptide spans 1 to 29 (MDSNADISARRVSGMDWLWLVCFFHLVTS). Topologically, residues 30 to 564 (LEEILLDTTG…AQDRLPLIVG (535 aa)) are extracellular. The 183-residue stretch at 31-213 (EEILLDTTGE…FFYKCPAVVK (183 aa)) folds into the Eph LBD domain. Fibronectin type-III domains are found at residues 344–452 (APRD…TSQS) and 453–548 (VPSA…TLMA). N-linked (GlcNAc...) asparagine glycosylation is present at Asn446. The chain crosses the membrane as a helical span at residues 565–585 (SALGGLAFLVIAAIAILAIIF). Over 586-1002 (KSKRRETPYT…HLNQLEPVEV (417 aa)) the chain is Cytoplasmic. Residues 637–900 (IKIEEVIGSG…QIVSALDKMI (264 aa)) form the Protein kinase domain. ATP is bound by residues 643 to 651 (IGSGEFGEV) and Lys669. Asp762 serves as the catalytic Proton acceptor. A disordered region spans residues 906–928 (LKATGTGSSRPSQPLLSNSPPDF). Over residues 910 to 928 (GTGSSRPSQPLLSNSPPDF) the composition is skewed to polar residues. One can recognise an SAM domain in the interval 929-993 (PSLSNAHEWL…LNSIQLMKVH (65 aa)). Residues 1000-1002 (VEV) carry the PDZ-binding motif.

The protein belongs to the protein kinase superfamily. Tyr protein kinase family. Ephrin receptor subfamily. In terms of tissue distribution, most abundant in thymus and detectable in brain, retina, kidney, lung and heart. Not detected in skeletal muscle and liver.

Its subcellular location is the membrane. It carries out the reaction L-tyrosyl-[protein] + ATP = O-phospho-L-tyrosyl-[protein] + ADP + H(+). Its function is as follows. Receptor for members of the ephrin-B family. The protein is Ephrin type-B receptor 5 (EPHB5) of Gallus gallus (Chicken).